A 237-amino-acid chain; its full sequence is Protein-S-isoprenylcysteine O-methyltransferase (237 aa).

A run of 4 helical transmembrane segments spans residues 26 to 46 (SSAISCGLGIGIGFGIALFIF), 53 to 73 (FGIYLAGLCTFHMWEYIWVTM), 92 to 112 (FNMALLISFIEFWIEWYFFPS), and 116 to 136 (FSLWWVGAICMVFGQIVRSVA). Residues Gln-149, 156–159 (HVLV), Tyr-164, and 169–172 (HPSY) contribute to the S-adenosyl-L-methionine site. The chain crosses the membrane as a helical span at residues 184-204 (VILMNPISIIGFGWASWSFFS). Residue Arg-206 participates in substrate binding. Glu-210 contributes to the S-adenosyl-L-methionine binding site.

The protein belongs to the class VI-like SAM-binding methyltransferase superfamily. Isoprenylcysteine carboxyl methyltransferase family.

It is found in the endoplasmic reticulum membrane. It catalyses the reaction [protein]-C-terminal S-[(2E,6E)-farnesyl]-L-cysteine + S-adenosyl-L-methionine = [protein]-C-terminal S-[(2E,6E)-farnesyl]-L-cysteine methyl ester + S-adenosyl-L-homocysteine. Its function is as follows. Methylates the C-terminal cysteine residues of small GTPases and the heterotrimeric G protein gamma subunit in response to cAMP. The methylation is required for intercellular signaling and regulation of cAMP waves propagation. It also seems to induce the activity of car1, a G protein-coupled receptor which senses extracellular cAMP during the aggregation phase of development. The chain is Protein-S-isoprenylcysteine O-methyltransferase (icmt-1) from Dictyostelium discoideum (Social amoeba).